We begin with the raw amino-acid sequence, 598 residues long: Elongation factor 4 (598 aa).

In terms of domain architecture, tr-type G spans 5 to 187 (ANIRNFSIIA…ALVEFIPAPT (183 aa)). GTP contacts are provided by residues 17 to 22 (DHGKST) and 134 to 137 (NKID).

This sequence belongs to the TRAFAC class translation factor GTPase superfamily. Classic translation factor GTPase family. LepA subfamily.

It is found in the cell inner membrane. The enzyme catalyses GTP + H2O = GDP + phosphate + H(+). Functionally, required for accurate and efficient protein synthesis under certain stress conditions. May act as a fidelity factor of the translation reaction, by catalyzing a one-codon backward translocation of tRNAs on improperly translocated ribosomes. Back-translocation proceeds from a post-translocation (POST) complex to a pre-translocation (PRE) complex, thus giving elongation factor G a second chance to translocate the tRNAs correctly. Binds to ribosomes in a GTP-dependent manner. The sequence is that of Elongation factor 4 from Psychrobacter cryohalolentis (strain ATCC BAA-1226 / DSM 17306 / VKM B-2378 / K5).